The sequence spans 138 residues: Putative nickel-responsive regulator (138 aa).

Residues His-76, His-87, His-89, and Cys-95 each coordinate Ni(2+).

This sequence belongs to the transcriptional regulatory CopG/NikR family. Ni(2+) is required as a cofactor.

Its function is as follows. Transcriptional regulator. This chain is Putative nickel-responsive regulator, found in Pseudomonas putida (strain W619).